The following is a 423-amino-acid chain: Testican-2 (423 aa).

The first 22 residues, 1–22 (MRAPGSGRLALPLLLLAVVALA), serve as a signal peptide directing secretion. Phosphoserine is present on S72. Disulfide bonds link C90/C101, C95/C111, C136/C166, C139/C159, and C148/C180. The Kazal-like domain occupies 130–182 (GGKDSVCKPCHMAQLASVCGSDGHTYSSVCKLEQQACLSSKQLAVRCEGPCPC). N-linked (GlcNAc...) asparagine glycosylation occurs at N225. Residues 309–375 (KPPCLAELER…GTRMHGTPDC (67 aa)) enclose the Thyroglobulin type-1 domain. 3 disulfide bridges follow: C312–C336, C347–C354, and C356–C375. O-linked (Xyl...) (glycosaminoglycan) serine glycosylation is found at S382 and S387. The segment at 387 to 423 (SGVGWEDEEEKETEEAGEEAEEEEGEAGEADDGGYIW) is disordered. Acidic residues predominate over residues 391–423 (WEDEEEKETEEAGEEAEEEEGEAGEADDGGYIW).

Post-translationally, O-glycosylated; contains chondroitin sulfate and heparan sulfate. Brain specific.

The protein resides in the secreted. The protein localises to the extracellular space. Its subcellular location is the extracellular matrix. Its function is as follows. May participate in diverse steps of neurogenesis. Binds calcium. The sequence is that of Testican-2 (Spock2) from Mus musculus (Mouse).